The following is a 132-amino-acid chain: Riboflavin kinase (132 aa).

CDP is bound at residue 13–18 (GLGHGS). The Mg(2+) site is built by threonine 40 and asparagine 42. FMN-binding residues include threonine 98 and glutamate 106. 111 to 114 (VYLR) contributes to the CDP binding site.

The protein belongs to the archaeal riboflavin kinase family. It depends on Mg(2+) as a cofactor.

It carries out the reaction riboflavin + CTP = CDP + FMN + H(+). It participates in cofactor biosynthesis; FMN biosynthesis; FMN from riboflavin (CTP route): step 1/1. Catalyzes the CTP-dependent phosphorylation of riboflavin (vitamin B2) to form flavin mononucleotide (FMN). In Aeropyrum pernix (strain ATCC 700893 / DSM 11879 / JCM 9820 / NBRC 100138 / K1), this protein is Riboflavin kinase.